The chain runs to 119 residues: UPF0145 protein Bcep18194_B0595 (119 aa).

It belongs to the UPF0145 family.

The protein is UPF0145 protein Bcep18194_B0595 of Burkholderia lata (strain ATCC 17760 / DSM 23089 / LMG 22485 / NCIMB 9086 / R18194 / 383).